Reading from the N-terminus, the 366-residue chain is Flagellar P-ring protein (366 aa).

A signal peptide spans 1-23 (MRTLKIFALAVSLLSMLAAPVQA).

The protein belongs to the FlgI family. As to quaternary structure, the basal body constitutes a major portion of the flagellar organelle and consists of four rings (L,P,S, and M) mounted on a central rod.

It is found in the periplasm. Its subcellular location is the bacterial flagellum basal body. In terms of biological role, assembles around the rod to form the L-ring and probably protects the motor/basal body from shearing forces during rotation. In Idiomarina loihiensis (strain ATCC BAA-735 / DSM 15497 / L2-TR), this protein is Flagellar P-ring protein.